Here is a 152-residue protein sequence, read N- to C-terminus: Transcriptional regulator MraZ (152 aa).

2 SpoVT-AbrB domains span residues 5–52 (ATLV…PLPA) and 81–124 (ASEC…DEQT).

Belongs to the MraZ family. As to quaternary structure, forms oligomers.

The protein resides in the cytoplasm. It localises to the nucleoid. Its function is as follows. Negatively regulates its own expression and that of the subsequent genes in the proximal part of the division and cell wall (dcw) gene cluster. Acts by binding directly to DNA. May also regulate the expression of genes outside the dcw cluster. This chain is Transcriptional regulator MraZ, found in Sodalis glossinidius (strain morsitans).